A 232-amino-acid chain; its full sequence is 2,3-bisphosphoglycerate-dependent phosphoglycerate mutase (232 aa).

Substrate contacts are provided by residues 8-15, 21-22, Arg60, 87-90, Lys98, 114-115, and 183-184; these read RHGESLWN, TG, ERHY, RR, and GN. His9 serves as the catalytic Tele-phosphohistidine intermediate. Catalysis depends on Glu87, which acts as the Proton donor/acceptor.

The protein belongs to the phosphoglycerate mutase family. BPG-dependent PGAM subfamily.

The enzyme catalyses (2R)-2-phosphoglycerate = (2R)-3-phosphoglycerate. Its pathway is carbohydrate degradation; glycolysis; pyruvate from D-glyceraldehyde 3-phosphate: step 3/5. Functionally, catalyzes the interconversion of 2-phosphoglycerate and 3-phosphoglycerate. The chain is 2,3-bisphosphoglycerate-dependent phosphoglycerate mutase from Clostridium beijerinckii (strain ATCC 51743 / NCIMB 8052) (Clostridium acetobutylicum).